Consider the following 562-residue polypeptide: Formate--tetrahydrofolate ligase (562 aa).

ATP is bound at residue 71–78; that stretch reads TPAGEGKS.

This sequence belongs to the formate--tetrahydrofolate ligase family.

It carries out the reaction (6S)-5,6,7,8-tetrahydrofolate + formate + ATP = (6R)-10-formyltetrahydrofolate + ADP + phosphate. It functions in the pathway one-carbon metabolism; tetrahydrofolate interconversion. This Bacillus thuringiensis (strain Al Hakam) protein is Formate--tetrahydrofolate ligase.